Consider the following 228-residue polypeptide: uncharacterized protein (228 aa).

Residues Val196–Gly228 are a coiled coil.

This is an uncharacterized protein from Acanthamoeba polyphaga (Amoeba).